Here is a 744-residue protein sequence, read N- to C-terminus: TonB-dependent heme receptor A (744 aa).

The signal sequence occupies residues 1 to 24 (MNILINKRIFLLVTLVGIQLNVTA). Residues 45–157 (DDSNKLPGRS…FAGTVKFETK (113 aa)) form the TBDR plug domain. A TBDR beta-barrel domain is found at 168–744 (KIGGFLKYGN…NIKFSLSQKF (577 aa)).

The protein belongs to the TonB-dependent receptor family.

The protein resides in the cell outer membrane. Functionally, heme receptor. This is TonB-dependent heme receptor A (tdhA) from Haemophilus influenzae (strain ATCC 51907 / DSM 11121 / KW20 / Rd).